Reading from the N-terminus, the 381-residue chain is Teichoic acid glycerol-phosphate primase (381 aa).

It belongs to the CDP-glycerol glycerophosphotransferase family.

It localises to the cell membrane. The catalysed reaction is N-acetyl-beta-D-mannosaminyl-(1-&gt;4)-N-acetyl-alpha-D-glucosaminyl di-trans,octa-cis-undecaprenyl diphosphate + CDP-glycerol = 4-O-[(2R)-glycerylphospho]-N-acetyl-beta-D-mannosaminyl-(1-&gt;4)-N-acetyl-alpha-D-glucosaminyl di-trans,octa-cis-undecaprenyl diphosphate + CMP + H(+). It functions in the pathway cell wall biogenesis; poly(glycerol phosphate) teichoic acid biosynthesis. Catalyzes the addition of a single glycerol phosphate residue to the prenoldiphosphate-linked disaccharide, as a primer for polymerisation by TagF. In Bacillus subtilis (strain 168), this protein is Teichoic acid glycerol-phosphate primase (tagB).